Here is a 348-residue protein sequence, read N- to C-terminus: tRNA N6-adenosine threonylcarbamoyltransferase (348 aa).

His-111 and His-115 together coordinate Fe cation. Substrate is bound by residues 134–138 (LISGG), Asp-167, Gly-180, and Asn-277. Residue Asp-305 coordinates Fe cation.

This sequence belongs to the KAE1 / TsaD family. Fe(2+) is required as a cofactor.

It localises to the cytoplasm. The catalysed reaction is L-threonylcarbamoyladenylate + adenosine(37) in tRNA = N(6)-L-threonylcarbamoyladenosine(37) in tRNA + AMP + H(+). Required for the formation of a threonylcarbamoyl group on adenosine at position 37 (t(6)A37) in tRNAs that read codons beginning with adenine. Is involved in the transfer of the threonylcarbamoyl moiety of threonylcarbamoyl-AMP (TC-AMP) to the N6 group of A37, together with TsaE and TsaB. TsaD likely plays a direct catalytic role in this reaction. This is tRNA N6-adenosine threonylcarbamoyltransferase from Haemophilus ducreyi (strain 35000HP / ATCC 700724).